The chain runs to 207 residues: Ribosomal RNA small subunit methyltransferase G (207 aa).

Residues Gly75, Leu80, 126–127 (VE), and Arg141 contribute to the S-adenosyl-L-methionine site.

Belongs to the methyltransferase superfamily. RNA methyltransferase RsmG family.

The protein resides in the cytoplasm. The enzyme catalyses guanosine(527) in 16S rRNA + S-adenosyl-L-methionine = N(7)-methylguanosine(527) in 16S rRNA + S-adenosyl-L-homocysteine. Its function is as follows. Specifically methylates the N7 position of guanine in position 527 of 16S rRNA. This chain is Ribosomal RNA small subunit methyltransferase G, found in Psychromonas ingrahamii (strain DSM 17664 / CCUG 51855 / 37).